Consider the following 62-residue polypeptide: Potassium channel toxin alpha-KTx 18.3 (62 aa).

Residues 1–26 (MHFSGVAFILISMVLIGSIFETTVEA) form the signal peptide. 3 disulfides stabilise this stretch: C34–C53, C39–C58, and C43–C60.

It belongs to the short scorpion toxin superfamily. Potassium channel inhibitor family. Alpha-KTx 18 subfamily. Expressed by the venom gland.

It localises to the secreted. Its function is as follows. Probable voltage-gated potassium channel inhibitor. The polypeptide is Potassium channel toxin alpha-KTx 18.3 (Tityus discrepans (Venezuelan scorpion)).